Here is an 87-residue protein sequence, read N- to C-terminus: Small ribosomal subunit protein uS17 (87 aa).

Belongs to the universal ribosomal protein uS17 family. As to quaternary structure, part of the 30S ribosomal subunit.

In terms of biological role, one of the primary rRNA binding proteins, it binds specifically to the 5'-end of 16S ribosomal RNA. The sequence is that of Small ribosomal subunit protein uS17 from Bacillus velezensis (strain DSM 23117 / BGSC 10A6 / LMG 26770 / FZB42) (Bacillus amyloliquefaciens subsp. plantarum).